The primary structure comprises 118 residues: MSTEPSKTLETFENPNPERDYTIRMEIPEFTCLCPKTGQPDFATLNLEYIPERHCVELKSLKLYIWSYRDVGGFHEALTNQILGDLVAATQPRYMKLTAHFNVRGGIWTTVEAEHHGR.

Cys-34 serves as the catalytic Thioimide intermediate. Residue Asp-41 is the Proton donor of the active site. Residues 56–58 and 75–76 contribute to the substrate site; these read VEL and HE.

Belongs to the GTP cyclohydrolase I family. QueF type 1 subfamily.

It localises to the cytoplasm. The enzyme catalyses 7-aminomethyl-7-carbaguanine + 2 NADP(+) = 7-cyano-7-deazaguanine + 2 NADPH + 3 H(+). Its pathway is tRNA modification; tRNA-queuosine biosynthesis. Functionally, catalyzes the NADPH-dependent reduction of 7-cyano-7-deazaguanine (preQ0) to 7-aminomethyl-7-deazaguanine (preQ1). This is NADPH-dependent 7-cyano-7-deazaguanine reductase from Halorhodospira halophila (strain DSM 244 / SL1) (Ectothiorhodospira halophila (strain DSM 244 / SL1)).